Consider the following 277-residue polypeptide: MLLDGRKTADILNEALRVKVQYLTKKPKLEIILIGNDEASKSYVKGKLNTASNLGMEVHINYLDEAIDQLSVEALIQKLNTDKGVHGILLQLPIPKHLDSDYLISLIDYKKDVDGFHTMNQGLLFQKKDGIRPATPLGIMMLLDFYNIPIEGKHVVIIGRSQIVGAPLSKMFLDRNATVTITHSKTKNLPSITKQADILVAAIGKPKFVTKDMVKVGAVVVDVGINRVDKKLVGDVDFEHVEPIASYITPVPKGVGPMTICALAHNLYALYLKQEKE.

NADP(+)-binding positions include 159–161 (GRS), Ser-184, and Ile-225.

Belongs to the tetrahydrofolate dehydrogenase/cyclohydrolase family. Homodimer.

The catalysed reaction is (6R)-5,10-methylene-5,6,7,8-tetrahydrofolate + NADP(+) = (6R)-5,10-methenyltetrahydrofolate + NADPH. The enzyme catalyses (6R)-5,10-methenyltetrahydrofolate + H2O = (6R)-10-formyltetrahydrofolate + H(+). Its pathway is one-carbon metabolism; tetrahydrofolate interconversion. In terms of biological role, catalyzes the oxidation of 5,10-methylenetetrahydrofolate to 5,10-methenyltetrahydrofolate and then the hydrolysis of 5,10-methenyltetrahydrofolate to 10-formyltetrahydrofolate. In Acholeplasma laidlawii (strain PG-8A), this protein is Bifunctional protein FolD.